A 1698-amino-acid polypeptide reads, in one-letter code: Protein 4.1 homolog (1698 aa).

Residues 1–31 (MPAEIKPSAPAEPETPTKSKPKSSSSSHGKP) form a disordered region. Low complexity predominate over residues 12–27 (EPETPTKSKPKSSSSS). One can recognise an FERM domain in the interval 32–314 (ALARVTLLDG…EHHTFFRLMT (283 aa)). The segment at 317-434 (PVSKSKMFPV…KEEKERKERE (118 aa)) is hydrophilic. 2 disordered regions span residues 335 to 361 (GRTQ…SGAR) and 374 to 710 (EKEK…SDPT). Residues 374–448 (EKEKVARKSS…EEKKKAEKAA (75 aa)) show a composition bias toward basic and acidic residues. The span at 449-461 (KAALAAGAAAGAA) shows a compositional bias: low complexity. 3 positions are modified to phosphoserine: Ser-471, Ser-474, and Ser-478. Over residues 499-514 (KDGKDKSGKDKDKEVG) the composition is skewed to basic and acidic residues. Residues 562–571 (DGNTSPTRKS) show a composition bias toward polar residues. Ser-566 carries the phosphoserine modification. A compositionally biased stretch (basic and acidic residues) spans 579 to 589 (YDQDPNSRKSG). The span at 594–603 (EQLSPTSQQK) shows a compositional bias: polar residues. The span at 618–627 (ALKETAEKLK) shows a compositional bias: basic and acidic residues. 2 positions are modified to phosphoserine: Ser-659 and Ser-687. The span at 684 to 696 (RSYSPTKGPQGYS) shows a compositional bias: polar residues. Phosphothreonine is present on Thr-689. Residues Ser-697, Ser-1398, Ser-1401, and Ser-1402 each carry the phosphoserine modification. Residues 1286-1698 (GEIVQVDPND…EKIEIQQQTQ (413 aa)) form a C-terminal (CTD) region. At Thr-1407 the chain carries Phosphothreonine. Basic and acidic residues predominate over residues 1509–1532 (LGKNAKTEQLEEKTVATTRTHDPN). Residues 1509-1599 (LGKNAKTEQL…SPLFTTSATT (91 aa)) are disordered. Over residues 1533–1554 (KQQQRVVTQEVKTTATVTSGDQ) the composition is skewed to polar residues. Positions 1561-1571 (VSSTSSGDSGT) are enriched in low complexity. Over residues 1584–1599 (RTDNQKSPLFTTSATT) the composition is skewed to polar residues. Ser-1590 is subject to Phosphoserine.

In terms of tissue distribution, at onset of germ band retraction, expression is seen in epidermis, hindgut and foregut. During retraction, expression extends to tracheal branches and salivary glands.

It is found in the cell junction. The protein localises to the septate junction. An integral component of the septate junction. May play a role in cell-cell interactions that are necessary for proper development. Vital for embryonic development. The protein is Protein 4.1 homolog (cora) of Drosophila melanogaster (Fruit fly).